Here is a 311-residue protein sequence, read N- to C-terminus: tRNA(Ile)-lysidine synthase (311 aa).

S31–S36 contributes to the ATP binding site.

This sequence belongs to the tRNA(Ile)-lysidine synthase family.

The protein resides in the cytoplasm. The enzyme catalyses cytidine(34) in tRNA(Ile2) + L-lysine + ATP = lysidine(34) in tRNA(Ile2) + AMP + diphosphate + H(+). Its function is as follows. Ligates lysine onto the cytidine present at position 34 of the AUA codon-specific tRNA(Ile) that contains the anticodon CAU, in an ATP-dependent manner. Cytidine is converted to lysidine, thus changing the amino acid specificity of the tRNA from methionine to isoleucine. In Petrotoga mobilis (strain DSM 10674 / SJ95), this protein is tRNA(Ile)-lysidine synthase.